The primary structure comprises 464 residues: Sushi repeat-containing protein SRPX (464 aa).

The N-terminal stretch at 1-30 (MGSPAHRPALLLLLPPLLLLLLLRVPPSRS) is a signal peptide. Residue S34 is glycosylated (O-linked (Xyl...) (chondroitin sulfate) serine). 5 disulfides stabilise this stretch: C57–C85, C69–C103, C89–C115, C120–C161, and C147–C174. Sushi domains are found at residues 57–117 (CSPI…ICKQ) and 118–176 (KRCP…SCVD). Positions 177 to 259 (MEPPRIKCPS…TCKFRVKVRV (83 aa)) constitute an HYR domain. A Sushi 3 domain is found at 260 to 319 (KRCGKLNAPENGYMKCSSDGDNYGATCEFSCIGGYELQGSPARVCQSNLAWSGTEPTCAA). 2 disulfide bridges follow: C262–C304 and C290–C317.

In terms of tissue distribution, detected in fibroblasts (at protein level). Retina and heart; less in placenta, pancreas, lung, liver, skeletal muscle, kidney and brain.

It is found in the cell surface. May be involved in phagocytosis during disk shedding, cell adhesion to cells other than the pigment epithelium or signal transduction. The protein is Sushi repeat-containing protein SRPX (SRPX) of Homo sapiens (Human).